The primary structure comprises 274 residues: 2,3,4,5-tetrahydropyridine-2,6-dicarboxylate N-succinyltransferase (274 aa).

Residues Arg-104 and Asp-141 each coordinate substrate.

Belongs to the transferase hexapeptide repeat family. As to quaternary structure, homotrimer.

It localises to the cytoplasm. It carries out the reaction (S)-2,3,4,5-tetrahydrodipicolinate + succinyl-CoA + H2O = (S)-2-succinylamino-6-oxoheptanedioate + CoA. It participates in amino-acid biosynthesis; L-lysine biosynthesis via DAP pathway; LL-2,6-diaminopimelate from (S)-tetrahydrodipicolinate (succinylase route): step 1/3. The protein is 2,3,4,5-tetrahydropyridine-2,6-dicarboxylate N-succinyltransferase of Wigglesworthia glossinidia brevipalpis.